Consider the following 602-residue polypeptide: DEAD-box ATP-dependent RNA helicase 52A (602 aa).

Residues 9–31 form a disordered region; that stretch reads KSVEAGGEPGGGGGGAWSTVSRS. Residues 15-24 are compositionally biased toward gly residues; it reads GEPGGGGGGA. Positions 84–112 match the Q motif motif; the sequence is DGFEAAGLVEAVLRNVARCGYESPTPVQR. Positions 115 to 305 constitute a Helicase ATP-binding domain; sequence MPIALAGRDL…SDFLSNYIFI (191 aa). 128 to 135 provides a ligand contact to ATP; the sequence is AQTGSGKT. A DEAD box motif is present at residues 249–252; that stretch reads DEAD. One can recognise a Helicase C-terminal domain in the interval 328 to 485; the sequence is EKRGYLLDLL…DVPDWLVQYA (158 aa). Disordered stretches follow at residues 492 to 521 and 552 to 602; these read GSSY…SGGG and RGGG…SGWD. The segment covering 552-574 has biased composition (gly residues); it reads RGGGYSRGGRGGYSGGGGGGGGD.

Belongs to the DEAD box helicase family. DDX3/DED1 subfamily.

The enzyme catalyses ATP + H2O = ADP + phosphate + H(+). The chain is DEAD-box ATP-dependent RNA helicase 52A from Oryza sativa subsp. japonica (Rice).